The chain runs to 546 residues: Phosphomethylpyrimidine synthase (546 aa).

Over residues 1 to 19 (MSTPSSRSQAPETVTTGPI) the composition is skewed to polar residues. The segment at 1 to 20 (MSTPSSRSQAPETVTTGPIQ) is disordered. Substrate is bound by residues Asn-146, Met-175, Tyr-204, His-240, 260 to 262 (SRG), 301 to 304 (DGLR), and Glu-340. Position 344 (His-344) interacts with Zn(2+). Tyr-367 is a binding site for substrate. Residue His-408 coordinates Zn(2+). [4Fe-4S] cluster is bound by residues Cys-488, Cys-491, and Cys-496.

The protein belongs to the ThiC family. It depends on [4Fe-4S] cluster as a cofactor.

The enzyme catalyses 5-amino-1-(5-phospho-beta-D-ribosyl)imidazole + S-adenosyl-L-methionine = 4-amino-2-methyl-5-(phosphooxymethyl)pyrimidine + CO + 5'-deoxyadenosine + formate + L-methionine + 3 H(+). It functions in the pathway cofactor biosynthesis; thiamine diphosphate biosynthesis. Its function is as follows. Catalyzes the synthesis of the hydroxymethylpyrimidine phosphate (HMP-P) moiety of thiamine from aminoimidazole ribotide (AIR) in a radical S-adenosyl-L-methionine (SAM)-dependent reaction. This chain is Phosphomethylpyrimidine synthase, found in Mycobacteroides abscessus (strain ATCC 19977 / DSM 44196 / CCUG 20993 / CIP 104536 / JCM 13569 / NCTC 13031 / TMC 1543 / L948) (Mycobacterium abscessus).